Consider the following 817-residue polypeptide: Protein Jade-3 (817 aa).

The disordered stretch occupies residues 1 to 38 (MKRLRNLSSSDSSDNESPSTSFSSCFQHKGKGKCTADD). Low complexity predominate over residues 8–24 (SSSDSSDNESPSTSFSS). The PHD-type 1 zinc finger occupies 202 to 252 (DVICDVCRSPDSEEGNDMVFCDRCNICVHQACYGILKVPEGSWLCRTCVLG). The C2HC pre-PHD-type zinc-finger motif lies at 254-288 (HPQCILCPKTGGAMKATRTGTKWAHVSCALWIPEV). Residues 312 to 368 (LVCSLCKLKTGACIQCSVKSCITAFHVTCAFEHSLEMKTILDEGDEVKFKSYCLKHS) form a PHD-type 2 zinc finger. Disordered stretches follow at residues 375–396 (ISEQ…SERT), 665–689 (NGVL…QNSE), and 719–817 (LVRT…SVQR). The span at 379 to 396 (EEPHKTHSDNRPTESERT) shows a compositional bias: basic and acidic residues. The segment covering 667–689 (VLSSGDRTQRDSSSQTSPGQNSE) has biased composition (polar residues). The span at 722–743 (TTEDLRSSEKPQRRQSVKERLW) shows a compositional bias: basic and acidic residues. The segment covering 747–758 (PADTQTSGTPYQ) has biased composition (polar residues). Basic and acidic residues predominate over residues 777–799 (DENKDHMLLRRNSRESPNRDSCR). A compositionally biased stretch (basic residues) spans 801 to 810 (SRIRGKRKMT).

This sequence belongs to the JADE family. In terms of assembly, component of the HBO1 complex.

Functionally, scaffold subunit of some HBO1 complexes, which have a histone H4 acetyltransferase activity. This chain is Protein Jade-3 (jade3), found in Xenopus tropicalis (Western clawed frog).